Reading from the N-terminus, the 265-residue chain is 5'-nucleotidase SurE (265 aa).

A divalent metal cation-binding residues include Asp-8, Asp-9, Ser-39, and Asn-96.

The protein belongs to the SurE nucleotidase family. The cofactor is a divalent metal cation.

Its subcellular location is the cytoplasm. The enzyme catalyses a ribonucleoside 5'-phosphate + H2O = a ribonucleoside + phosphate. Functionally, nucleotidase that shows phosphatase activity on nucleoside 5'-monophosphates. The chain is 5'-nucleotidase SurE from Dehalococcoides mccartyi (strain ATCC BAA-2266 / KCTC 15142 / 195) (Dehalococcoides ethenogenes (strain 195)).